The sequence spans 280 residues: 2-dehydro-3-deoxyphosphooctonate aldolase (280 aa).

The protein belongs to the KdsA family.

Its subcellular location is the cytoplasm. The enzyme catalyses D-arabinose 5-phosphate + phosphoenolpyruvate + H2O = 3-deoxy-alpha-D-manno-2-octulosonate-8-phosphate + phosphate. The protein operates within carbohydrate biosynthesis; 3-deoxy-D-manno-octulosonate biosynthesis; 3-deoxy-D-manno-octulosonate from D-ribulose 5-phosphate: step 2/3. It participates in bacterial outer membrane biogenesis; lipopolysaccharide biosynthesis. The polypeptide is 2-dehydro-3-deoxyphosphooctonate aldolase (Thioalkalivibrio sulfidiphilus (strain HL-EbGR7)).